Here is a 369-residue protein sequence, read N- to C-terminus: Phospho-N-acetylmuramoyl-pentapeptide-transferase (369 aa).

10 consecutive transmembrane segments (helical) span residues 2 to 22 (IAILLAVAFGITFTLFTTPFF), 54 to 74 (GLVIVVASIISYFLANFFLGL), 80 to 100 (GLLVIFMFVGMSLVGFLDDIL), 113 to 133 (FYKVVLQSFIAVPFALLTFLV), 158 to 178 (ALFSLGIIGVFSAWILYLLWI), 195 to 215 (LDGLAAGAMIFTMLAYVVIGF), 241 to 261 (PLDMSILAAAILGSLLGFLWW), 268 to 288 (IMMGDTGALALGGAAAALSIL), 293 to 313 (LLFLVLGGLFVIEAGSVILQI), and 347 to 367 (FWIIAGLFTALGIGLFYADWL).

The protein belongs to the glycosyltransferase 4 family. MraY subfamily. Mg(2+) serves as cofactor.

The protein localises to the cell membrane. The catalysed reaction is UDP-N-acetyl-alpha-D-muramoyl-L-alanyl-gamma-D-glutamyl-meso-2,6-diaminopimeloyl-D-alanyl-D-alanine + di-trans,octa-cis-undecaprenyl phosphate = di-trans,octa-cis-undecaprenyl diphospho-N-acetyl-alpha-D-muramoyl-L-alanyl-D-glutamyl-meso-2,6-diaminopimeloyl-D-alanyl-D-alanine + UMP. It functions in the pathway cell wall biogenesis; peptidoglycan biosynthesis. Catalyzes the initial step of the lipid cycle reactions in the biosynthesis of the cell wall peptidoglycan: transfers peptidoglycan precursor phospho-MurNAc-pentapeptide from UDP-MurNAc-pentapeptide onto the lipid carrier undecaprenyl phosphate, yielding undecaprenyl-pyrophosphoryl-MurNAc-pentapeptide, known as lipid I. This chain is Phospho-N-acetylmuramoyl-pentapeptide-transferase, found in Tropheryma whipplei (strain Twist) (Whipple's bacillus).